A 376-amino-acid polypeptide reads, in one-letter code: Phosphoserine aminotransferase (376 aa).

Residue Arg-42 participates in L-glutamate binding. 4 residues coordinate pyridoxal 5'-phosphate: Trp-104, Thr-163, Asp-188, and Gln-211. N6-(pyridoxal phosphate)lysine is present on Lys-212. Residue 253–254 coordinates pyridoxal 5'-phosphate; it reads NT.

Belongs to the class-V pyridoxal-phosphate-dependent aminotransferase family. SerC subfamily. As to quaternary structure, homodimer. It depends on pyridoxal 5'-phosphate as a cofactor.

It localises to the cytoplasm. It catalyses the reaction O-phospho-L-serine + 2-oxoglutarate = 3-phosphooxypyruvate + L-glutamate. It carries out the reaction 4-(phosphooxy)-L-threonine + 2-oxoglutarate = (R)-3-hydroxy-2-oxo-4-phosphooxybutanoate + L-glutamate. It participates in amino-acid biosynthesis; L-serine biosynthesis; L-serine from 3-phospho-D-glycerate: step 2/3. It functions in the pathway cofactor biosynthesis; pyridoxine 5'-phosphate biosynthesis; pyridoxine 5'-phosphate from D-erythrose 4-phosphate: step 3/5. Its function is as follows. Catalyzes the reversible conversion of 3-phosphohydroxypyruvate to phosphoserine and of 3-hydroxy-2-oxo-4-phosphonooxybutanoate to phosphohydroxythreonine. This Bordetella avium (strain 197N) protein is Phosphoserine aminotransferase.